A 1051-amino-acid chain; its full sequence is Integrin alpha-3 (1051 aa).

Positions 1–32 are cleaved as a signal peptide; sequence MGPGPRCAPGDPGWMLGALALMVAASGRFAFA. Over 33–991 the chain is Extracellular; that stretch reads FNLDTRFLVV…LVEELPAEIE (959 aa). FG-GAP repeat units follow at residues 38–103, 110–171, 185–235, 236–292, 293–354, 356–411, and 415–477; these read RFLV…KDDC, EKSD…DLQL, CNSN…WDLS, EYSY…GGDL, KRKQ…TSFP, QPSL…GLLR, and QIVH…VARP. An N-linked (GlcNAc...) asparagine glycan is attached at Asn86. 3 disulfides stabilise this stretch: Cys94-Cys103, Cys140-Cys162, and Cys185-Cys197. Ca(2+)-binding residues include Asp315, Asn317, Asp319, Asp323, Asp378, Asn380, Asp382, Asp386, Asp439, Asp441, Asn443, Tyr445, and Asp447. Intrachain disulfides connect Cys485/Cys490 and Cys496/Cys550. N-linked (GlcNAc...) asparagine glycosylation is found at Asn500, Asn511, Asn573, and Asn605. Residues Cys615 and Cys621 are joined by a disulfide bond. Asn656, Asn697, and Asn841 each carry an N-linked (GlcNAc...) asparagine glycan. Residues Cys694 and Cys702 are joined by a disulfide bond. Intrachain disulfides connect Cys846–Cys904 and Cys911–Cys916. Residues 860–888 form a disordered region; the sequence is LSDPGDKPHSPQRRRRQLDPGGDQGSPPV. N-linked (GlcNAc...) asparagine glycosylation is found at Asn923, Asn926, Asn935, and Asn969. Residues 992–1019 traverse the membrane as a helical segment; it reads LWLVLVAVSAGLLLLGLIIILLWKCGFF. The GFFKR motif motif lies at 1017–1021; the sequence is GFFKR. Residues 1020 to 1051 lie on the Cytoplasmic side of the membrane; it reads KRARTRALYEAKRQKAEMKSQPSETERLTDDY.

It belongs to the integrin alpha chain family. In terms of assembly, heterodimer of an alpha and a beta subunit. The alpha subunit is composed of a heavy and a light chain linked by a disulfide bond. Alpha-3 associates with beta-1. Interacts with HPS5. Interacts with FAP (seprase); the interaction occurs at the cell surface of invadopodia membrane in a collagen-dependent manner. Isoform 1, but not isoform 2, is phosphorylated on serine residues.

The protein localises to the cell membrane. It is found in the cell projection. Its subcellular location is the invadopodium membrane. It localises to the filopodium membrane. In terms of biological role, integrin alpha-3/beta-1 is a receptor for fibronectin, laminin, collagen, epiligrin, thrombospondin and CSPG4. Integrin alpha-3/beta-1 provides a docking site for FAP (seprase) at invadopodia plasma membranes in a collagen-dependent manner and hence may participate in the adhesion, formation of invadopodia and matrix degradation processes, promoting cell invasion. Alpha-3/beta-1 may mediate with LGALS3 the stimulation by CSPG4 of endothelial cells migration. In Cricetulus griseus (Chinese hamster), this protein is Integrin alpha-3 (ITGA3).